Reading from the N-terminus, the 657-residue chain is 1-deoxy-D-xylulose-5-phosphate synthase (657 aa).

Thiamine diphosphate is bound by residues histidine 73 and 113–115 (SHA). Aspartate 145 is a binding site for Mg(2+). Thiamine diphosphate-binding positions include 146 to 147 (GA), asparagine 175, tyrosine 293, and glutamate 375. A Mg(2+)-binding site is contributed by asparagine 175.

It belongs to the transketolase family. DXPS subfamily. Homodimer. It depends on Mg(2+) as a cofactor. Requires thiamine diphosphate as cofactor.

The enzyme catalyses D-glyceraldehyde 3-phosphate + pyruvate + H(+) = 1-deoxy-D-xylulose 5-phosphate + CO2. The protein operates within metabolic intermediate biosynthesis; 1-deoxy-D-xylulose 5-phosphate biosynthesis; 1-deoxy-D-xylulose 5-phosphate from D-glyceraldehyde 3-phosphate and pyruvate: step 1/1. Functionally, catalyzes the acyloin condensation reaction between C atoms 2 and 3 of pyruvate and glyceraldehyde 3-phosphate to yield 1-deoxy-D-xylulose-5-phosphate (DXP). This chain is 1-deoxy-D-xylulose-5-phosphate synthase, found in Pseudarthrobacter chlorophenolicus (strain ATCC 700700 / DSM 12829 / CIP 107037 / JCM 12360 / KCTC 9906 / NCIMB 13794 / A6) (Arthrobacter chlorophenolicus).